The chain runs to 159 residues: Ribosomal RNA large subunit methyltransferase H (159 aa).

Residues Leu76, Gly108, and 127-132 (FSKMTF) contribute to the S-adenosyl-L-methionine site.

It belongs to the RNA methyltransferase RlmH family. As to quaternary structure, homodimer.

It localises to the cytoplasm. It catalyses the reaction pseudouridine(1915) in 23S rRNA + S-adenosyl-L-methionine = N(3)-methylpseudouridine(1915) in 23S rRNA + S-adenosyl-L-homocysteine + H(+). Functionally, specifically methylates the pseudouridine at position 1915 (m3Psi1915) in 23S rRNA. The chain is Ribosomal RNA large subunit methyltransferase H from Clostridium tetani (strain Massachusetts / E88).